A 167-amino-acid polypeptide reads, in one-letter code: Ribosome maturation factor RimM (167 aa).

A PRC barrel domain is found at 94-167 (EENEYFIKDL…VMVVHLLEGL (74 aa)).

Belongs to the RimM family. Binds ribosomal protein uS19.

The protein localises to the cytoplasm. In terms of biological role, an accessory protein needed during the final step in the assembly of 30S ribosomal subunit, possibly for assembly of the head region. Essential for efficient processing of 16S rRNA. May be needed both before and after RbfA during the maturation of 16S rRNA. It has affinity for free ribosomal 30S subunits but not for 70S ribosomes. In Thermoanaerobacter pseudethanolicus (strain ATCC 33223 / 39E) (Clostridium thermohydrosulfuricum), this protein is Ribosome maturation factor RimM.